The primary structure comprises 43 residues: Protein PsbN (43 aa).

The helical transmembrane segment at 5–27 (TLVAISISGSLVSFTGYALYTAF) threads the bilayer.

It belongs to the PsbN family.

It localises to the plastid. It is found in the chloroplast thylakoid membrane. In terms of biological role, may play a role in photosystem I and II biogenesis. This chain is Protein PsbN, found in Lactoris fernandeziana.